Here is a 273-residue protein sequence, read N- to C-terminus: Light-independent protochlorophyllide reductase iron-sulfur ATP-binding protein (273 aa).

ATP contacts are provided by residues 12–17 (GIGKST) and K41. Residue S16 participates in Mg(2+) binding. The [4Fe-4S] cluster site is built by C97 and C131. Residue 182–183 (NR) coordinates ATP.

It belongs to the NifH/BchL/ChlL family. In terms of assembly, homodimer. Protochlorophyllide reductase is composed of three subunits; BchL, BchN and BchB. [4Fe-4S] cluster serves as cofactor.

The enzyme catalyses chlorophyllide a + oxidized 2[4Fe-4S]-[ferredoxin] + 2 ADP + 2 phosphate = protochlorophyllide a + reduced 2[4Fe-4S]-[ferredoxin] + 2 ATP + 2 H2O. It functions in the pathway porphyrin-containing compound metabolism; bacteriochlorophyll biosynthesis (light-independent). Its function is as follows. Component of the dark-operative protochlorophyllide reductase (DPOR) that uses Mg-ATP and reduced ferredoxin to reduce ring D of protochlorophyllide (Pchlide) to form chlorophyllide a (Chlide). This reaction is light-independent. The L component serves as a unique electron donor to the NB-component of the complex, and binds Mg-ATP. The polypeptide is Light-independent protochlorophyllide reductase iron-sulfur ATP-binding protein (Chloroflexus aurantiacus (strain ATCC 29364 / DSM 637 / Y-400-fl)).